The primary structure comprises 964 residues: Protein translocase subunit SecA (964 aa).

Residues Gln86, 104 to 108, and Asp494 contribute to the ATP site; that span reads GEGKT. The segment at 848–964 is disordered; that stretch reads AESADTIAVA…YKMCHGQNEK (117 aa). A compositionally biased stretch (acidic residues) spans 871–882; it reads AEGEVEEEDEDT. Positions 889-900 are enriched in low complexity; sequence AESAAASGAGES. The Zn(2+) site is built by Cys947, Cys949, Cys958, and His959.

This sequence belongs to the SecA family. In terms of assembly, monomer and homodimer. Part of the essential Sec protein translocation apparatus which comprises SecA, SecYEG and auxiliary proteins SecDF. Other proteins may also be involved. Zn(2+) is required as a cofactor.

It localises to the cell membrane. Its subcellular location is the cytoplasm. It carries out the reaction ATP + H2O + cellular proteinSide 1 = ADP + phosphate + cellular proteinSide 2.. In terms of biological role, part of the Sec protein translocase complex. Interacts with the SecYEG preprotein conducting channel. Has a central role in coupling the hydrolysis of ATP to the transfer of proteins into and across the cell membrane, serving as an ATP-driven molecular motor driving the stepwise translocation of polypeptide chains across the membrane. This is Protein translocase subunit SecA from Bifidobacterium longum (strain DJO10A).